The sequence spans 853 residues: DNA mismatch repair protein MutS (853 aa).

614–621 (GPNMGGKS) serves as a coordination point for ATP.

Belongs to the DNA mismatch repair MutS family.

Its function is as follows. This protein is involved in the repair of mismatches in DNA. It is possible that it carries out the mismatch recognition step. This protein has a weak ATPase activity. The protein is DNA mismatch repair protein MutS of Shigella flexneri serotype 5b (strain 8401).